A 637-amino-acid chain; its full sequence is Early transcription factor 70 kDa subunit (637 aa).

A Helicase ATP-binding domain is found at 32-185 (RTIIDENRSV…GHIIDLMSEE (154 aa)). Position 45-52 (45-52 (HIMGSGKT)) interacts with ATP. The short motif at 135–138 (DEAH) is the DEXH box element. The 181-residue stretch at 327–507 (KFKYFINRIQ…VLPFDIKKLL (181 aa)) folds into the Helicase C-terminal domain.

Belongs to the helicase family. VETF subfamily. In terms of assembly, heterodimer of a 70 kDa and a 82 kDa subunit. Part of the early transcription complex composed of ETF, RAP94/OPG109, and the DNA-directed RNA polymerase.

The protein localises to the virion. Its function is as follows. Acts with RNA polymerase to initiate transcription from early gene promoters. Is recruited by the RPO-associated protein of 94 kDa RAP94/OPG109 to form the early transcription complex, which also contains the core RNA polymerase. ETF heterodimer binds to early gene promoters. The protein is Early transcription factor 70 kDa subunit (OPG118) of Homo sapiens (Human).